The sequence spans 210 residues: Late transcription elongation factor OPG110 (210 aa).

Residues 25 to 36 (RNSAENKDKNED) are compositionally biased toward basic and acidic residues. The interval 25–102 (RNSAENKDKN…PPPSSSPGVG (78 aa)) is disordered. Positions 49–68 (PKTKRTTTPRKPAATKRSTK) are enriched in basic residues.

This sequence belongs to the orthopoxvirus OPG110 family. In terms of assembly, interacts with the DNA polymerase processivity factor A20. Interacts with B1R kinase. Interacts with the late transcription factors VLTF-1 and VLTF-3. Interacts with the late transcription elongation factor G2. Interacts with itself. Might be part of a transcription complex composed at least of G2, A18, and H5. In terms of processing, phosphorylated at multiple sites. Phosphorylation is necessary for cleavage activity. Phosphorylated by the viral B1R and F10 kinases.

Its subcellular location is the virion. The protein resides in the host cytoplasm. In terms of biological role, involved in the co-transcriptional or post-transcriptional endoribonucleolytic cleavage that generates sequence-homogeneous 3' ends during late transcription. Involved in postreplicative transcription elongation on intermediate and late genes. Also involved in DNA replication and in multiple steps of virion morphogenesis. Required both for inclusion of virosoplasm into crescents as well as for maturation of immature virions (IV) into mature virions (MV). The chain is Late transcription elongation factor OPG110 (OPG110) from Cynomys gunnisoni (Gunnison's prairie dog).